The primary structure comprises 342 residues: Lipopolysaccharide heptosyltransferase 1 (342 aa).

ADP-L-glycero-beta-D-manno-heptose is bound by residues Ser-188, Ser-189, Lys-193, Glu-225, Asp-268, Ser-269, Gly-270, and His-273.

This sequence belongs to the glycosyltransferase 9 family.

It localises to the cell inner membrane. The catalysed reaction is an alpha-Kdo-(2-&gt;4)-alpha-Kdo-(2-&gt;6)-lipid A + ADP-L-glycero-beta-D-manno-heptose = an L-alpha-D-Hep-(1-&gt;5)-[alpha-Kdo-(2-&gt;4)]-alpha-Kdo-(2-&gt;6)-lipid A + ADP + H(+). Its pathway is bacterial outer membrane biogenesis; LPS core biosynthesis. Its function is as follows. Glycosyltransferase involved in the biosynthesis of the core oligosaccharide region of lipopolysaccharide (LPS). Catalyzes the addition of the first heptose unit to one 3-deoxy-D-manno-octulosonic acid (Kdo) residue of the Kdo2-lipid A module. This Campylobacter coli protein is Lipopolysaccharide heptosyltransferase 1.